Here is a 317-residue protein sequence, read N- to C-terminus: Adenosine receptor A3 (317 aa).

The Extracellular portion of the chain corresponds to 1-14 (MPVNSTAVSWTSVT). Asn4 is a glycosylation site (N-linked (GlcNAc...) asparagine). Residues 15–37 (YITVEILIGLCAIVGNVLVIWVV) form a helical membrane-spanning segment. Residues 38-48 (KLNPSLQTTTF) lie on the Cytoplasmic side of the membrane. The helical transmembrane segment at 49 to 72 (YFIVSLALADIAVGVLVMPLAIVI) threads the bilayer. The Extracellular segment spans residues 73–84 (SLGVTIHFYSCL). A disulfide bridge connects residues Cys83 and Cys165. The helical transmembrane segment at 85–106 (FMTCLMLIFTHASIMSLLAIAV) threads the bilayer. Residues 107–126 (DRYLRVKLTVRYRRVTTQRR) lie on the Cytoplasmic side of the membrane. Residues 127 to 148 (IWLALGLCWLVSFLVGLTPMFG) form a helical membrane-spanning segment. The Extracellular segment spans residues 149 to 176 (WNMKLSSADENLTFLPCRFRSVMRMDYM). Asn159 carries N-linked (GlcNAc...) asparagine glycosylation. The helical transmembrane segment at 177–197 (VYFSFFLWILVPLVVMCAIYF) threads the bilayer. At 198–230 (DIFYIIRNRLSQSFSGSRETGAFYGREFKTAKS) the chain is on the cytoplasmic side. The helical transmembrane segment at 231–254 (LLLVLFLFALCWLPLSIINCILYF) threads the bilayer. The Extracellular segment spans residues 255–260 (DGQVPQ). Residues 261–283 (TVLYLGILLSHANSMMNPIVYAY) traverse the membrane as a helical segment. Residues 284–317 (KIKKFKETYLLILKACVMCQPSKSMDPSTEQTSE) lie on the Cytoplasmic side of the membrane. Cys302 carries the S-palmitoyl cysteine lipid modification.

It belongs to the G-protein coupled receptor 1 family. Phosphorylation on Thr-315 and Ser-316 may be crucial for rapid desensitization. Phosphorylation on Thr-315 may be necessary for phosphorylation on Ser-316 to occur. As to expression, most abundant in lung, spleen and pineal gland. Moderate expression in brain, kidney and testis.

It is found in the cell membrane. In terms of biological role, receptor for adenosine. The activity of this receptor is mediated by G proteins which inhibits adenylyl cyclase. The protein is Adenosine receptor A3 (ADORA3) of Ovis aries (Sheep).